Here is a 420-residue protein sequence, read N- to C-terminus: Bile acid-CoA:amino acid N-acyltransferase (420 aa).

At Lys40 the chain carries N6-succinyllysine. Ser125 is modified (phosphoserine). Catalysis depends on charge relay system residues Cys235 and Asp328. Lys346 and Lys350 each carry N6-succinyllysine. Residue His362 is the Charge relay system of the active site. Position 409 is an N6-succinyllysine (Lys409). Ser418 bears the Phosphoserine mark.

The protein belongs to the C/M/P thioester hydrolase family. In terms of assembly, monomer. As to expression, highly expressed in liver, kidney, gallbladder, proximal intestine and distal intestine. Weakly expressed in adrenal gland, lung, brain and muscle.

It localises to the cytoplasm. It is found in the cytosol. Its subcellular location is the peroxisome. The catalysed reaction is choloyl-CoA + glycine = glycocholate + CoA + H(+). The enzyme catalyses hexadecanoyl-CoA + H2O = hexadecanoate + CoA + H(+). It catalyses the reaction choloyl-CoA + H2O = cholate + CoA + H(+). It carries out the reaction chenodeoxycholoyl-CoA + H2O = chenodeoxycholate + CoA + H(+). The catalysed reaction is eicosanoyl-CoA + H2O = eicosanoate + CoA + H(+). The enzyme catalyses octadecanoyl-CoA + H2O = octadecanoate + CoA + H(+). It catalyses the reaction docosanoyl-CoA + H2O = docosanoate + CoA + H(+). It carries out the reaction tetracosanoyl-CoA + H2O = tetracosanoate + CoA + H(+). The catalysed reaction is hexacosanoyl-CoA + H2O = hexacosanoate + CoA + H(+). The enzyme catalyses dodecanoyl-CoA + H2O = dodecanoate + CoA + H(+). It catalyses the reaction tetradecanoyl-CoA + H2O = tetradecanoate + CoA + H(+). It carries out the reaction choloyl-CoA + taurine = taurocholate + CoA + H(+). The catalysed reaction is chenodeoxycholoyl-CoA + glycine = glycochenodeoxycholate + CoA + H(+). The enzyme catalyses chenodeoxycholoyl-CoA + taurine = taurochenodeoxycholate + CoA + H(+). It catalyses the reaction eicosanoyl-CoA + glycine = N-eicosanoylglycinate + CoA + H(+). It carries out the reaction hexacosanoyl-CoA + glycine = N-hexacosanoylglycine + CoA + H(+). The catalysed reaction is docosanoyl-CoA + glycine = N-docosanoylglycine + CoA + H(+). Catalyzes the amidation of bile acids (BAs) with the amino acid taurine. Selective for taurine conjugation of cholyl CoA and only taurine-conjugated BAs are found in bile. Amidation of BAs in the liver with taurine prior to their excretion into bile is an important biochemical event in bile acid metabolism. This conjugation (or amidation) plays several important biological roles in that it promotes the secretion of BAs and cholesterol into bile and increases the detergent properties of BAs in the intestine, which facilitates lipid and vitamin absorption. May also act as an acyl-CoA thioesterase that regulates intracellular levels of free fatty acids. In vitro, catalyzes the hydrolysis of long- and very long-chain saturated acyl-CoAs to the free fatty acid and coenzyme A (CoASH), and conjugates glycine to these acyl-CoAs. In Mus musculus (Mouse), this protein is Bile acid-CoA:amino acid N-acyltransferase (Baat).